The following is a 298-amino-acid chain: MRWPWSGHDEEKKRNAATRSKRAETANSWTGTLLESRTLVPSVALTVSTVLGLRLYKAYFRRIPTVNHIKPDYFRRRTLFGQVTSVGDADNFRLYHTPGGRLAGWGWLPWKTVPTKREALVKQTVGPVLILWRLRPRRISSDWMLKAIQLHIRIAGVDAPELAHWGREAQPYSKEALDWLTQLILHQRVRVRLYRRDQYDRVVAQVYYRRWFFRQDVGLEMLKMGLATVYEAKSGAEFGDVEQQYRAAEEKAKESRAGMWAKPNLLQRLGGAGTKAPESPREYKSRHTAAEKQKKAAW.

The segment at 1–24 (MRWPWSGHDEEKKRNAATRSKRAE) is disordered. The helical transmembrane segment at 39-56 (LVPSVALTVSTVLGLRLY) threads the bilayer. In terms of domain architecture, TNase-like spans 77 to 262 (RTLFGQVTSV…KESRAGMWAK (186 aa)). The active site involves Arg153. Asp158 is a Ca(2+) binding site. Catalysis depends on residues Glu161 and Arg201. A disordered region spans residues 269–298 (LGGAGTKAPESPREYKSRHTAAEKQKKAAW). Positions 278-298 (ESPREYKSRHTAAEKQKKAAW) are enriched in basic and acidic residues.

This sequence belongs to the LCL3 family.

The protein resides in the mitochondrion. It is found in the membrane. This is Probable endonuclease LCL3 (LCL3) from Leptosphaeria maculans (strain JN3 / isolate v23.1.3 / race Av1-4-5-6-7-8) (Blackleg fungus).